A 456-amino-acid polypeptide reads, in one-letter code: Signal recognition particle receptor FtsY (456 aa).

Positions 1–26 are enriched in basic and acidic residues; sequence MFDGLKKKLNRFRNDVEETAEEKAEA. The segment at 1-163 is disordered; sequence MFDGLKKKLN…DEDDSSGPGR (163 aa). The segment covering 27-39 has biased composition (acidic residues); it reads AADEAESDADAEA. Residues 40-62 show a composition bias toward low complexity; sequence ESAPADTDNAAVEPEASEPAAAD. Over residues 63–81 the composition is skewed to acidic residues; it reads PDADAVGDADAGSEADAVD. Residues 82–97 are compositionally biased toward low complexity; sequence AADAPADAESSSAAVE. Positions 112 to 134 are enriched in acidic residues; it reads PDSEVDAGADTGDEPSGEPTADE. GTP is bound by residues 265 to 272, 347 to 351, and 405 to 408; these read GINGVGKT, DTAGR, and TKAD.

Belongs to the GTP-binding SRP family. FtsY subfamily. As to quaternary structure, part of the signal recognition particle protein translocation system, which is composed of SRP and FtsY.

It localises to the cell membrane. It is found in the cytoplasm. The enzyme catalyses GTP + H2O = GDP + phosphate + H(+). In terms of biological role, involved in targeting and insertion of nascent membrane proteins into the cytoplasmic membrane. Acts as a receptor for the complex formed by the signal recognition particle (SRP) and the ribosome-nascent chain (RNC). This Haloferax volcanii (strain ATCC 29605 / DSM 3757 / JCM 8879 / NBRC 14742 / NCIMB 2012 / VKM B-1768 / DS2) (Halobacterium volcanii) protein is Signal recognition particle receptor FtsY.